A 132-amino-acid polypeptide reads, in one-letter code: Small ribosomal subunit protein uS11 (132 aa).

The segment at 1–21 is disordered; the sequence is MAAPKSAVRKPRRKDKKNIAV. Basic residues predominate over residues 7–16; that stretch reads AVRKPRRKDK.

Belongs to the universal ribosomal protein uS11 family. As to quaternary structure, part of the 30S ribosomal subunit. Interacts with proteins S7 and S18. Binds to IF-3.

Located on the platform of the 30S subunit, it bridges several disparate RNA helices of the 16S rRNA. Forms part of the Shine-Dalgarno cleft in the 70S ribosome. The protein is Small ribosomal subunit protein uS11 of Clavibacter sepedonicus (Clavibacter michiganensis subsp. sepedonicus).